Reading from the N-terminus, the 258-residue chain is tRNA pseudouridine synthase A (258 aa).

The Nucleophile role is filled by D52. Position 110 (Y110) interacts with substrate.

Belongs to the tRNA pseudouridine synthase TruA family. As to quaternary structure, homodimer.

It catalyses the reaction uridine(38/39/40) in tRNA = pseudouridine(38/39/40) in tRNA. In terms of biological role, formation of pseudouridine at positions 38, 39 and 40 in the anticodon stem and loop of transfer RNAs. The polypeptide is tRNA pseudouridine synthase A (Francisella philomiragia subsp. philomiragia (strain ATCC 25017 / CCUG 19701 / FSC 153 / O#319-036)).